Here is a 424-residue protein sequence, read N- to C-terminus: Glutamate-1-semialdehyde 2,1-aminomutase (424 aa).

The residue at position 263 (Lys263) is an N6-(pyridoxal phosphate)lysine.

Belongs to the class-III pyridoxal-phosphate-dependent aminotransferase family. HemL subfamily. As to quaternary structure, homodimer. Pyridoxal 5'-phosphate serves as cofactor.

The protein resides in the cytoplasm. It carries out the reaction (S)-4-amino-5-oxopentanoate = 5-aminolevulinate. It functions in the pathway porphyrin-containing compound metabolism; protoporphyrin-IX biosynthesis; 5-aminolevulinate from L-glutamyl-tRNA(Glu): step 2/2. In Campylobacter jejuni (strain RM1221), this protein is Glutamate-1-semialdehyde 2,1-aminomutase.